The sequence spans 247 residues: Cell division protein ZapD (247 aa).

It belongs to the ZapD family. In terms of assembly, interacts with FtsZ.

The protein localises to the cytoplasm. Its function is as follows. Cell division factor that enhances FtsZ-ring assembly. Directly interacts with FtsZ and promotes bundling of FtsZ protofilaments, with a reduction in FtsZ GTPase activity. The sequence is that of Cell division protein ZapD from Citrobacter koseri (strain ATCC BAA-895 / CDC 4225-83 / SGSC4696).